A 473-amino-acid chain; its full sequence is Phosphoglucosamine mutase (473 aa).

Residue Ser102 is the Phosphoserine intermediate of the active site. Ser102, Asp248, Asp250, and Asp252 together coordinate Mg(2+). Ser102 is subject to Phosphoserine.

The protein belongs to the phosphohexose mutase family. The cofactor is Mg(2+). Activated by phosphorylation.

It catalyses the reaction alpha-D-glucosamine 1-phosphate = D-glucosamine 6-phosphate. Functionally, catalyzes the conversion of glucosamine-6-phosphate to glucosamine-1-phosphate. This is Phosphoglucosamine mutase from Rhodospirillum centenum (strain ATCC 51521 / SW).